The primary structure comprises 1774 residues: 6-methylsalicylic acid synthase (1774 aa).

The span at 1–14 (MHSAATSTYPSGKT) shows a compositional bias: polar residues. Positions 1-21 (MHSAATSTYPSGKTSPAPVGT) are disordered. Residues 32 to 457 (SNDVAVVGMA…GTVSHAVIEE (426 aa)) form the Ketosynthase family 3 (KS3) domain. The interval 186–238 (RISYHLNLMGPSTAVDAACASSLVAIHHGVQAIRLGESKVAIVGGVNALCGPG) is acyltransferase. Residues cysteine 204, histidine 339, and histidine 379 each act as for beta-ketoacyl synthase activity in the active site. The segment at 642–676 (NGITPQAVIGHSVGEIAASVVAGALSPAEGALIVT) is acetyl/malonyl transferases. Serine 653 functions as the For malonyltransferase activity in the catalytic mechanism. An N-terminal hotdog fold region spans residues 926-1045 (HTLLGQRIPV…AYWDRKVAGS (120 aa)). The region spanning 926-1202 (HTLLGQRIPV…FSEIEGTPGV (277 aa)) is the PKS/mFAS DH domain. Histidine 958 (proton acceptor; for dehydratase activity) is an active-site residue. Residues 1059–1202 (VTKLADNFSI…FSEIEGTPGV (144 aa)) are C-terminal hotdog fold. Aspartate 1123 functions as the Proton donor; for dehydratase activity in the catalytic mechanism. The 2-oxoacyl reductase stretch occupies residues 1403–1450 (GPRLLPRPEGTYLITGGLGVLGLEVADFLVEKGARRLLLISRRALPPR). 1419–1424 (GLGVLG) serves as a coordination point for NADP(+). One can recognise a Carrier domain in the interval 1698–1772 (AYLDEKIRGC…HLAVWFAEKL (75 aa)). Position 1732 is an O-(pantetheine 4'-phosphoryl)serine (serine 1732).

As to quaternary structure, homomultimer.

The catalysed reaction is 3 malonyl-CoA + acetyl-CoA + NADPH + 3 H(+) = 6-methylsalicylate + 3 CO2 + NADP(+) + 4 CoA + H2O. The protein operates within mycotoxin biosynthesis; patulin biosynthesis. Its function is as follows. This multifunctional enzyme is a polyketide synthase. It catalyzes a total of 11 steps by seven different component enzymes, in the biosynthesis of the antibiotic patulin. The chain is 6-methylsalicylic acid synthase from Penicillium patulum (Penicillium griseofulvum).